The chain runs to 509 residues: Photosystem II CP47 reaction center protein (509 aa).

The next 6 membrane-spanning stretches (helical) occupy residues 21 to 36, 101 to 115, 140 to 156, 203 to 218, 237 to 252, and 457 to 472; these read AVHLMHTALVAGWAGS, IGLSGLLFLAAIWHW, GIHLFLSGLLCFGFGAF, IAAGIVGILAGLFHLS, VLSSSISAVFFAAFIV, and SFALIFFFGHLWHGGR.

This sequence belongs to the PsbB/PsbC family. PsbB subfamily. As to quaternary structure, PSII is composed of 1 copy each of membrane proteins PsbA, PsbB, PsbC, PsbD, PsbE, PsbF, PsbH, PsbI, PsbJ, PsbK, PsbL, PsbM, PsbT, PsbX, PsbY, PsbZ, Psb30/Ycf12, at least 3 peripheral proteins of the oxygen-evolving complex and a large number of cofactors. It forms dimeric complexes. Binds multiple chlorophylls. PSII binds additional chlorophylls, carotenoids and specific lipids. serves as cofactor.

Its subcellular location is the plastid. The protein resides in the cyanelle thylakoid membrane. One of the components of the core complex of photosystem II (PSII). It binds chlorophyll and helps catalyze the primary light-induced photochemical processes of PSII. PSII is a light-driven water:plastoquinone oxidoreductase, using light energy to abstract electrons from H(2)O, generating O(2) and a proton gradient subsequently used for ATP formation. This is Photosystem II CP47 reaction center protein from Cyanophora paradoxa.